The chain runs to 224 residues: Extracellular protease inhibitor 10 (224 aa).

The N-terminal stretch at Met1 to Ala22 is a signal peptide. 3 Kazal-like domains span residues Asp23–Ser72, Thr90–Lys127, and Gly156–Ser210. N-linked (GlcNAc...) asparagine glycosylation is present at Asn25. Cystine bridges form between Cys26–Cys56, Cys30–Cys49, and Cys38–Cys70. A disordered region spans residues Glu69–Gly92. Positions Ala71–Gly92 are enriched in low complexity. 5 disulfide bridges follow: Cys96-Cys126, Cys100-Cys119, Cys162-Cys193, Cys167-Cys186, and Cys175-Cys208. Asn199 is a glycosylation site (N-linked (GlcNAc...) asparagine). Positions Met202–Leu224 are disordered. Positions Gln211–Leu224 are enriched in low complexity.

As to quaternary structure, interacts with host subtilisin-like protease P69B.

The protein localises to the secreted. Its function is as follows. Secreted effector that interacts with and inhibits the pathogenesis-related P69B subtilisin-like serine protease of host tomato. Inhibition of host proteases by a pathogen extracellular protease inhibitor forms a specific type of defense-counterdefense mechanism between plants and microbial pathogens. This chain is Extracellular protease inhibitor 10, found in Phytophthora infestans (Potato late blight agent).